We begin with the raw amino-acid sequence, 266 residues long: Ribosomal RNA small subunit methyltransferase A (266 aa).

Positions 10, 12, 37, 58, 82, and 105 each coordinate S-adenosyl-L-methionine.

This sequence belongs to the class I-like SAM-binding methyltransferase superfamily. rRNA adenine N(6)-methyltransferase family. RsmA subfamily.

It is found in the cytoplasm. The catalysed reaction is adenosine(1518)/adenosine(1519) in 16S rRNA + 4 S-adenosyl-L-methionine = N(6)-dimethyladenosine(1518)/N(6)-dimethyladenosine(1519) in 16S rRNA + 4 S-adenosyl-L-homocysteine + 4 H(+). In terms of biological role, specifically dimethylates two adjacent adenosines (A1518 and A1519) in the loop of a conserved hairpin near the 3'-end of 16S rRNA in the 30S particle. May play a critical role in biogenesis of 30S subunits. The sequence is that of Ribosomal RNA small subunit methyltransferase A from Mycoplasma mycoides subsp. mycoides SC (strain CCUG 32753 / NCTC 10114 / PG1).